The sequence spans 670 residues: MLSKLFVFLLICYATADEVDKKEAKHGFQLFHWNWDHIHKVYVITTWLLVASLAKILFNLMKPLSKWLPDSSLLIIVGLGLGYFLNQTTLSGVHLDSHAFFLYLLPPIIFDAGYFMPNRALFKNFDSVLVFSVLGTLWNTFAIGGSLLIMSKYQLFTMPFTTFEILVFSALISAVDPVAVIAIFEEIHVNEFLFINVFGEALFNDGVTVVLYQMFKSFALIGSENLSPWDYATGGLSFFVVALGGAAIGIIFAIATSLATKYTQGIKILAPVFIFLLPYMAYLTAEMVSLSSIIAIAVCGMLMKQYIKGNITEAATNSVKYFTKMLAQCSETVIFMFLGLSTLTSEHHVDFIFIGATLVFCLIYRAIGIIVQCFILNKFRAKKFEVVDQFILSYGGLRGAIAYGLVVSIPASIQAKPMFITTTICVIYFTVFLQGITIRPLVNCLNVKKKEHREATMVESVYNKYLDYMMSGVEDIAGQRGHYSFIENFERFNAKVIKPVLMRHEKRQSFDATSIIRAYEKITLEDAIKLTKVKSTLQNKRLEKVKSEVRVAPEQTTVTPKDVQLARFMQSGENIDQLYTLFSDLLDKKLNELKVQADKVDKANDDDIQDDYMAEMGSHSNLGFMHHSADQLDSDSVFQRRGRRLSTGDLKGHCGTSRKPKHSMFELRHV.

The next 8 helical transmembrane spans lie at 41–61 (VYVITTWLLVASLAKILFNLM), 73–93 (LLIIVGLGLGYFLNQTTLSGV), 97–117 (SHAFFLYLLPPIIFDAGYFMP), 129–149 (LVFSVLGTLWNTFAIGGSLLI), 164–184 (EILVFSALISAVDPVAVIAIF), 192–212 (FLFINVFGEALFNDGVTVVLY), 235–255 (GLSFFVVALGGAAIGIIFAIA), and 268–288 (ILAPVFIFLLPYMAYLTAEMV). A glycan (N-linked (GlcNAc...) asparagine) is linked at Asn310. A run of 4 helical transmembrane segments spans residues 325 to 345 (MLAQCSETVIFMFLGLSTLTS), 351 to 371 (FIFIGATLVFCLIYRAIGIIV), 390 to 410 (FILSYGGLRGAIAYGLVVSIP), and 418 to 438 (MFITTTICVIYFTVFLQGITI). Residues 648 to 670 (GDLKGHCGTSRKPKHSMFELRHV) are disordered.

This sequence belongs to the monovalent cation:proton antiporter 1 (CPA1) transporter (TC 2.A.36) family. In terms of processing, phosphorylated. As to expression, expressed in hypodermal cells of the main body syncytium, ut1 cells of the vulva and the spermathecal junction cell.

The protein localises to the endomembrane system. In terms of biological role, plays a role in epithelial membrane transport processes. This Caenorhabditis elegans protein is Probable Na(+)/H(+) antiporter nhx-3 (nhx-3).